We begin with the raw amino-acid sequence, 270 residues long: DNA adenine methylase (270 aa).

Residues tryptophan 10, lysine 14, aspartate 54, and aspartate 181 each contribute to the S-adenosyl-L-methionine site.

The protein belongs to the N(4)/N(6)-methyltransferase family.

It catalyses the reaction a 2'-deoxyadenosine in DNA + S-adenosyl-L-methionine = an N(6)-methyl-2'-deoxyadenosine in DNA + S-adenosyl-L-homocysteine + H(+). Its function is as follows. An alpha subtype methylase, recognizes the double-stranded sequence 5'-GATC-3' and methylates A-2. Overexpression leads to hypermutability. May be involved in methyl-directed DNA mismatch repair, initiation of chromosome replication and gene expression. The sequence is that of DNA adenine methylase from Serratia marcescens.